The following is a 90-amino-acid chain: MTRTIICRKYKEELPGLERPPYPGAKGQDIFDHVSAKAWGDWLKHQTLLINEKRLNMMNAEDRKYLAGEMDKFFSGEEYAKADGYVPPAQ.

Belongs to the Fe(2+)-trafficking protein family.

Could be a mediator in iron transactions between iron acquisition and iron-requiring processes, such as synthesis and/or repair of Fe-S clusters in biosynthetic enzymes. The protein is Probable Fe(2+)-trafficking protein of Pseudomonas fluorescens (strain SBW25).